A 550-amino-acid chain; its full sequence is Glucose-6-phosphate isomerase 3 (550 aa).

E357 acts as the Proton donor in catalysis. Catalysis depends on residues H388 and K514.

Belongs to the GPI family.

It is found in the cytoplasm. It carries out the reaction alpha-D-glucose 6-phosphate = beta-D-fructose 6-phosphate. The protein operates within carbohydrate biosynthesis; gluconeogenesis. Its pathway is carbohydrate degradation; glycolysis; D-glyceraldehyde 3-phosphate and glycerone phosphate from D-glucose: step 2/4. Its function is as follows. Catalyzes the reversible isomerization of glucose-6-phosphate to fructose-6-phosphate. This chain is Glucose-6-phosphate isomerase 3, found in Rhodococcus jostii (strain RHA1).